We begin with the raw amino-acid sequence, 87 residues long: uncharacterized protein (87 aa).

A signal peptide spans methionine 1–alanine 23. Positions aspartate 24–aspartate 44 are disordered.

It localises to the secreted. This is an uncharacterized protein from Homo sapiens (Human).